We begin with the raw amino-acid sequence, 975 residues long: MTTINIGTIPVVINQNADTQMGEGTKNIFPIVKDFVDPFADLEMRCAERVKRMGELCFSKKGRYITMIPKPDYIKAREKEQREEELNFQNSEHVLNSLDTTCTPEHHSSRNNGMQVSFKTQHYKRTFRKPRIQAKKRDLKGQHTIHYVAKELLSIVKKRDMVLEVVDKRKHANFATFRRYGKTYGMHITLNHMVRKRRRVDVTLNKLMTEIAMHCAIPFECLNTLTLRKGHSGLVLQTETVPNVHKIKSKITIVRGVVNEGNIPVLIDARKKLSGRDMSTIREFSAGDLFWKGYNQTFIDNRPTDLNHQCTSDLNVTQCGSVMALLTLALFPCGRITCKKCVENFLNQNNKERFNNASVFINQVIQLLEKGFSEFKHSKEILLMFKERLQMENPATDQCMEIAKATAALPEAPFSHIKEINNVLLKYGSLSNEEVGGASKHLLEVVRYIRNRTDSIQRNDLSKFRNKISSKTHINLDLMCDNQLDKNANFVWGQRAYHAKRFLSNYFNEINPSEGYDKFIFRKLPNGARELAIGRLIMPTNFEAFREQMKGKMIDNGPIGKDCVSRMRGSFCYPCCCTTDDVGTAVISDFKMPTKYHLVLGGNDLAKYIKLPTDTTGNMYIAKDGFCHINIFFAMLVNVSEEKSKDFTKMVRDQIMPKLGEWPTMMDVATACWQLTVWFPDTLSAELPRILVDHKLGIMHVLDSYGSISAGYHVLKANIVSQLIKFASDDLESELKYYRVGGDCNFGSRVRIDTKFLLKSIYRPDLLERIIEHEPFVLVLAMQSPAVLLALFNSASLEKAVQYWMHREMQVSHIMTLLAVLASNVSASKLLTTQFEIIEASAPQILAEMDKVHLPMHSIHSANVFLMNMSESRETDKTIDELGFYSFKKSSRILMEKNLNGGFGGAMARIRIVGTVVFNKAVVASASKIFKLCNPTRRARYKRQVHNLTQVIRGSDKTTVTCSEGSGCPFCRKED.

Residues 139–284 (LKGQHTIHYV…GRDMSTIREF (146 aa)) form the Peptidase S30 domain. Catalysis depends on for P1 proteinase activity residues His192, Asp201, and Ser232. The Involved in interaction with stylet and aphid transmission motif lies at 335 to 338 (RITC). The Involved in virions binding and aphid transmission motif lies at 593–595 (PTK). The 123-residue stretch at 619-741 (MYIAKDGFCH…ESELKYYRVG (123 aa)) folds into the Peptidase C6 domain. Residues Cys627 and His700 each act as for helper component proteinase activity in the active site.

This sequence belongs to the potyviridae P3N-PIPO polyprotein family. In terms of assembly, interacts (via PIPO domain) with host PCaP1 protein; this interaction may help to anchor the movement complex to the plasma membrane from which the complex could move to the plasmodesmata. In terms of processing, potyviral RNA is expressed as two polyproteins which undergo post-translational proteolytic processing. Genome polyprotein is processed by NIa-pro, P1 and HC-pro proteinases resulting in the production of at least ten individual proteins. P3N-PIPO is cleaved by P1 and HC-pro proteinases resulting in the production of three individual proteins. The P1 proteinase and the HC-pro cleave only their respective C-termini autocatalytically.

Its subcellular location is the host cell junction. It is found in the host plasmodesma. It carries out the reaction Hydrolyzes a Gly-|-Gly bond at its own C-terminus, commonly in the sequence -Tyr-Xaa-Val-Gly-|-Gly, in the processing of the potyviral polyprotein.. Required for aphid transmission and also has proteolytic activity. Only cleaves a Gly-Gly dipeptide at its own C-terminus. Interacts with virions and aphid stylets. Acts as a suppressor of RNA-mediated gene silencing, also known as post-transcriptional gene silencing (PTGS), a mechanism of plant viral defense that limits the accumulation of viral RNAs. May have RNA-binding activity. Functionally, allows efficient cell to cell propagation, by bypassing the host cell wall barrier. Transports viral genome to neighboring plant cells directly through plasmosdesmata, without any budding. The sequence is that of P3N-PIPO polyprotein from Arachis hypogaea (Peanut).